Here is a 323-residue protein sequence, read N- to C-terminus: Type II restriction enzyme BsoBI (323 aa).

Residues Asp-212, Glu-240, and Lys-242 each coordinate Mg(2+).

In terms of assembly, homodimer.

It carries out the reaction Endonucleolytic cleavage of DNA to give specific double-stranded fragments with terminal 5'-phosphates.. A P subtype restriction enzyme that recognizes the double-stranded sequence 5'-CYCGRG-3' and cleaves after C-1. The sequence is that of Type II restriction enzyme BsoBI from Geobacillus stearothermophilus (Bacillus stearothermophilus).